A 113-amino-acid chain; its full sequence is U11-theraphotoxin-Hhn1u (113 aa).

Positions 1 to 21 (MNTVRVTFLLVFVLAVSLGQA) are cleaved as a signal peptide. Positions 22 to 74 (DKDENRMEMQEKTEQGKSYLDFAENLLLQKLEELEAKLLEEDSEESRNSRQKR) are excised as a propeptide. Cystine bridges form between C75/C90, C82/C95, and C89/C110.

This sequence belongs to the neurotoxin 14 (magi-1) family. 01 (HNTX-16) subfamily. In terms of tissue distribution, expressed by the venom gland.

Its subcellular location is the secreted. In terms of biological role, probable ion channel inhibitor. The sequence is that of U11-theraphotoxin-Hhn1u from Cyriopagopus hainanus (Chinese bird spider).